We begin with the raw amino-acid sequence, 317 residues long: Mitochondrial outer membrane protein porin 4 (317 aa).

Positions 1-30 (MEAETECKVPGVYSETGIPVEDPAPGLNSD) are disordered.

The protein belongs to the eukaryotic mitochondrial porin (TC 1.B.8.1) family.

It is found in the mitochondrion outer membrane. Functionally, forms a channel through the mitochondrial outer membrane that allows diffusion of small hydrophilic molecules. The channel adopts an open conformation at low or zero membrane potential and a closed conformation at potentials above 30-40 mV. The open state has a weak anion selectivity whereas the closed state is cation-selective. The sequence is that of Mitochondrial outer membrane protein porin 4 (VDAC4) from Oryza sativa subsp. japonica (Rice).